Reading from the N-terminus, the 300-residue chain is Protein sprouty homolog 4 (300 aa).

Met1 is subject to N-acetylmethionine. Disordered regions lie at residues 1-28 and 52-114; these read MEPP…SRAP and DYID…RLLD. Low complexity-rich tracts occupy residues 7–21 and 92–108; these read QSSV…MVQP and SFSG…STSS. At Ser126 the chain carries Phosphoserine. Residues 167-274 enclose the SPR domain; the sequence is KCKECASPRT…GYDRLRRPGC (108 aa).

Belongs to the sprouty family. Interacts (via C-terminus) with TESK1 (via both C- and N-termini); the interaction inhibits TESK1 kinase activity. Interacts with RAF1. Interacts with CAV1 (via C-terminus). As to expression, expressed in the embryo and adult tissues including heart, brain, lung, kidney, and skeletal muscle.

It is found in the cytoplasm. The protein localises to the cell projection. It localises to the ruffle membrane. Suppresses the insulin receptor and EGFR-transduced MAPK signaling pathway, but does not inhibit MAPK activation by a constitutively active mutant Ras. Probably impairs the formation of GTP-Ras. Inhibits Ras-independent, but not Ras-dependent, activation of RAF1. Represses integrin-mediated cell spreading via inhibition of TESK1-mediated phosphorylation of cofilin. In Mus musculus (Mouse), this protein is Protein sprouty homolog 4 (Spry4).